The following is a 392-amino-acid chain: GDSL esterase/lipase ESM1 (392 aa).

An N-terminal signal peptide occupies residues 1–28 (MADNLNLVSVLGVLLVLTIFHNPIIVYA). Catalysis depends on Ser43, which acts as the Nucleophile. 3 N-linked (GlcNAc...) asparagine glycosylation sites follow: Asn146, Asn166, and Asn290. Active-site residues include Asp324 and His327.

Belongs to the 'GDSL' lipolytic enzyme family.

Its subcellular location is the secreted. Represses or inhibits nitriles production from methionine-derived and from indol-3-ylmethyl glucosinolates. Favors isothiocyanate production. In Arabidopsis thaliana (Mouse-ear cress), this protein is GDSL esterase/lipase ESM1 (ESM1).